The following is a 67-amino-acid chain: Alpha-like toxin Lqh3 (67 aa).

The 65-residue stretch at arginine 2–histidine 66 folds into the LCN-type CS-alpha/beta domain. 4 cysteine pairs are disulfide-bonded: cysteine 12/cysteine 65, cysteine 16/cysteine 37, cysteine 23/cysteine 47, and cysteine 27/cysteine 49. Serine amide is present on serine 67.

Belongs to the long (4 C-C) scorpion toxin superfamily. Sodium channel inhibitor family. Alpha subfamily. In terms of assembly, monomer. In terms of tissue distribution, expressed by the venom gland.

Its subcellular location is the secreted. Functionally, alpha toxins bind voltage-independently at site-3 of sodium channels (Nav) and inhibit the inactivation of the activated channels, thereby blocking neuronal transmission. The dissociation is voltage-dependent. This alpha-like toxin is highly toxic to insects and competes with LqhaIT on binding to insect sodium channels. Differs from classical anti-mammalian alpha-toxins as it inhibits sodium channel inactivation in cell bodies of hippocampus brain neurons, on which the anti-mammalian Lqh2 is inactive, and is unable to affect Nav1.2 in the rat brain, on which Lqh2 is highly active. Moreover, its pharmacological properties are unique in that its binding affinity for insect channels drops &gt;30-fold at pH 8.5 versus pH 6.5, and its rate of association with receptor site-3 on both insect and mammalian sodium channels is 4-15-fold slower compared with LqhaIT and Lqh2. This chain is Alpha-like toxin Lqh3, found in Leiurus hebraeus (Hebrew deathstalker scorpion).